The sequence spans 297 residues: Molybdate/tungstate import ATP-binding protein WtpC (297 aa).

The 225-residue stretch at 2-226 (LKVNNLSKIW…PKNKKVAEFL (225 aa)) folds into the ABC transporter domain. 32 to 39 (GPSGAGKS) is a binding site for ATP.

It belongs to the ABC transporter superfamily. Sulfate/tungstate importer (TC 3.A.1.6) family. As to quaternary structure, the complex is composed of two ATP-binding proteins (WtpC), two transmembrane proteins (WtpB) and a solute-binding protein (WtpA).

The protein resides in the cell membrane. The catalysed reaction is tungstate(in) + ATP + H2O = tungstate(out) + ADP + phosphate + H(+). Part of the ABC transporter complex WtpABC involved in molybdate/tungstate import. Responsible for energy coupling to the transport system. The polypeptide is Molybdate/tungstate import ATP-binding protein WtpC (wtpC) (Methanocaldococcus jannaschii (strain ATCC 43067 / DSM 2661 / JAL-1 / JCM 10045 / NBRC 100440) (Methanococcus jannaschii)).